Reading from the N-terminus, the 353-residue chain is MSEPLKPRIDFAEPLKEESTSTFKAQQTFSEVESRTFSPAAIDEYPEDEGTAEAAVDAALQPKRSLWRKMVLGGLALFGASVVGQGIQWTMNAWQTQDWAALGGCAAGALIIGAGVGSVITEWRRLWRLRQRAHERDEARELLHSHSVGKGRAYCEKLAQQAGIDQSHPALQRWYAAIHETQNDREIVGLYAHLVQPVLDAQARREVSRFAAESTLMIAVSPLALVDMAFIAWRNLRLINRIAALYGIELGYYSRLRLFRLVLLNIAFAGASELVREVGMDWMSQDLAARLSTRAAQGIGAGLLTARLGIKTMELCRPLPWFDDDKPRLGDFRRQLIGQLKETLQKNKPTPEK.

The span at 1–19 (MSEPLKPRIDFAEPLKEES) shows a compositional bias: basic and acidic residues. The disordered stretch occupies residues 1–29 (MSEPLKPRIDFAEPLKEESTSTFKAQQTF). Residues 20–29 (TSTFKAQQTF) are compositionally biased toward polar residues. A run of 3 helical transmembrane segments spans residues 70–90 (MVLG…IQWT), 100–120 (AALG…GSVI), and 213–233 (ESTL…FIAW).

Belongs to the UPF0283 family.

The protein localises to the cell inner membrane. The polypeptide is UPF0283 membrane protein YcjF (Salmonella arizonae (strain ATCC BAA-731 / CDC346-86 / RSK2980)).